The following is a 271-amino-acid chain: Large ribosomal subunit protein uL18 (271 aa).

Basic and acidic residues predominate over residues 245-264; the sequence is IRENPCPPKKERTKPADAKR. The disordered stretch occupies residues 245 to 271; it reads IRENPCPPKKERTKPADAKRWSPQAHL.

The protein belongs to the universal ribosomal protein uL18 family. Component of the large ribosomal subunit (LSU).

The protein localises to the cytoplasm. It is found in the nucleus. In terms of biological role, component of the ribosome, a large ribonucleoprotein complex responsible for the synthesis of proteins in the cell. The small ribosomal subunit (SSU) binds messenger RNAs (mRNAs) and translates the encoded message by selecting cognate aminoacyl-transfer RNA (tRNA) molecules. The large subunit (LSU) contains the ribosomal catalytic site termed the peptidyl transferase center (PTC), which catalyzes the formation of peptide bonds, thereby polymerizing the amino acids delivered by tRNAs into a polypeptide chain. The nascent polypeptides leave the ribosome through a tunnel in the LSU and interact with protein factors that function in enzymatic processing, targeting, and the membrane insertion of nascent chains at the exit of the ribosomal tunnel. The protein is Large ribosomal subunit protein uL18 (RPL5) of Dunaliella salina (Green alga).